The chain runs to 351 residues: Methylthioribose-1-phosphate isomerase (351 aa).

Substrate-binding positions include R51–A53, R94, and Q199. The Proton donor role is filled by D240. N250 to K251 is a binding site for substrate.

The protein belongs to the EIF-2B alpha/beta/delta subunits family. MtnA subfamily. Homodimer.

It carries out the reaction 5-(methylsulfanyl)-alpha-D-ribose 1-phosphate = 5-(methylsulfanyl)-D-ribulose 1-phosphate. The protein operates within amino-acid biosynthesis; L-methionine biosynthesis via salvage pathway; L-methionine from S-methyl-5-thio-alpha-D-ribose 1-phosphate: step 1/6. Functionally, catalyzes the interconversion of methylthioribose-1-phosphate (MTR-1-P) into methylthioribulose-1-phosphate (MTRu-1-P). The polypeptide is Methylthioribose-1-phosphate isomerase (Bacillus thuringiensis (strain Al Hakam)).